Here is a 205-residue protein sequence, read N- to C-terminus: Isochorismatase domain-containing protein 2 (205 aa).

Ser7 and Ser202 each carry phosphoserine.

It belongs to the isochorismatase family. In terms of assembly, interacts with CDKN2A.

The protein localises to the cytoplasm. It is found in the nucleus. The sequence is that of Isochorismatase domain-containing protein 2 (ISOC2) from Pongo abelii (Sumatran orangutan).